Consider the following 1138-residue polypeptide: MVKLSIVLTPQFLSHDQGQLTKELQQHVKSVTCPCEYLRKVINTLADHHHRGTDFGGSPWLHVIIAFPTSYKVVITLWIVYLWVSLLKTIFWSRNGHDGSTDVQQRAWRSNRRRQEGLRSICMHTKKRVSSFRGNKIGLKDVITLRRHVETKVRAKIRKRKVTTKINHHDKINGKRKTARKQKMFQRAQELRRRAEDYHKCKIPPSARKALCNWVRMAAAEHRHSSGLPYWPYLTAETLKNRMGHQPPPPTQQHSITDNSLSLKTPPECVLTPLPPSADDNLKTPPECVLTPLPPSADDNLKTPPECLLTPLPPSADDNLKTPPECLLTPLPPSADDNLKTPPECLLTPLPPSAPPSAPPSADDNLKTRAECLLHPLPPSADDNLKTPSERQLTPLPPSAPPSADDNIKTPAERLRGPLPPSADDNLKTPSERQLTPLPPSAPPSADDNIKTPAERLRGPLPPSADDNLKTPSERQLTPLPPSAPPSADDNIKTPAERLRGPLPPSADDNLKTPSERQLTPLPPSAPPSADDNIKTPAERLRGPLPPSADDNLKTPSERQLTPLPPSAPPSADDNIKTPAFHPQRMIISRHLPSVSSLPFHPQLHSQQMIISRYLLSVCGFRFHHQPMIISRHLPSVSSLPFHPQLHPQQMIISRHLPSVCGGRFHPQRMIISRHLPSVSSLPFHPQLHPQQMIISRHLPSVCGGRFHPQRMIISRHLPSVSSLPFHPQLHPQQMIISRHLPSVCGERLRGPLPPSADDNLKTPSERQLTPLPPSAPPSADDNIKTPAERLRRPLPPSADDNLKTPSERQLTPLPPSAPPSADDNIKTPAERLRGPLPPSADDNLKTPSERQLTPLPPSAPPSADDNIKTPAERLRGPLPPSADDNLKTPSERQLTPLPPSAPPSADDNIKTPAERLRGPLPPSADDNLKTPSERQLTPLPPSAPPSADDNIKTPAERLRGPLPPSADDNLKTPSERQLTPLPPSAPPSADDNIKTPAERLRGPLPPSADDNLKTPPLATQEAEAEKPRKPKRQRAAEMEPPPEPKRRRVGDVEPSRKPKRRRAADVEPSSPKPKRRRVGDVEPSRKPKRRRAADVEPSSPEPKRRRVGDVEPSRKPKRRRAADVEPSSPEPKRRRLS.

Residues 73–93 traverse the membrane as a helical segment; it reads VVITLWIVYLWVSLLKTIFWS. Disordered regions lie at residues 242-578 and 747-1138; these read RMGH…NIKT and ERLR…RRLS. Residues 252-263 show a composition bias toward polar residues; it reads QQHSITDNSLSL. Positions 349 to 359 are enriched in pro residues; sequence PLPPSAPPSAP. 10 stretches are compositionally biased toward basic and acidic residues: residues 406–416, 448–458, 490–500, 532–542, 782–792, 824–834, 866–876, 908–918, 950–960, and 992–1002; these read DNIKTPAERLR.

Belongs to the NPIP family.

The protein localises to the membrane. The sequence is that of Nuclear pore complex-interacting protein family member B13 from Homo sapiens (Human).